Here is a 406-residue protein sequence, read N- to C-terminus: Tryptophan 2,3-dioxygenase (406 aa).

Substrate is bound by residues 72–76 and Arg144; that span reads FIITH. His328 contacts heme. Thr342 contacts substrate.

The protein belongs to the tryptophan 2,3-dioxygenase family. As to quaternary structure, homotetramer. Dimer of dimers. Requires heme as cofactor.

It carries out the reaction L-tryptophan + O2 = N-formyl-L-kynurenine. It functions in the pathway amino-acid degradation; L-tryptophan degradation via kynurenine pathway; L-kynurenine from L-tryptophan: step 1/2. Functionally, heme-dependent dioxygenase that catalyzes the oxidative cleavage of the L-tryptophan (L-Trp) pyrrole ring and converts L-tryptophan to N-formyl-L-kynurenine. Catalyzes the oxidative cleavage of the indole moiety. The protein is Tryptophan 2,3-dioxygenase of Homo sapiens (Human).